The chain runs to 860 residues: DNA mismatch repair protein MutS (860 aa).

625-632 is a binding site for ATP; the sequence is GPNMGGKS.

This sequence belongs to the DNA mismatch repair MutS family.

In terms of biological role, this protein is involved in the repair of mismatches in DNA. It is possible that it carries out the mismatch recognition step. This protein has a weak ATPase activity. The chain is DNA mismatch repair protein MutS from Aeromonas hydrophila subsp. hydrophila (strain ATCC 7966 / DSM 30187 / BCRC 13018 / CCUG 14551 / JCM 1027 / KCTC 2358 / NCIMB 9240 / NCTC 8049).